We begin with the raw amino-acid sequence, 522 residues long: Tetratricopeptide repeat and J domain-containing co-chaperone DNJ1 (522 aa).

The first 22 residues, Met-1–Gly-22, serve as a signal peptide directing secretion. 7 TPR repeats span residues Ala-29–Gly-62, Tyr-63–Phe-96, Val-97–Ser-130, Gly-142–Ser-175, Thr-210–Ser-243, Leu-256–Phe-289, and Val-356–Ser-389. A J domain is found at Asp-410–Asp-471. The segment at Gln-465 to Phe-494 is disordered.

The protein resides in the endoplasmic reticulum lumen. Functionally, endoplasmic reticulum co-chaperone crucial for survival and virulence factor production at elevated temperatures representative of febrile patients during infection. Contributes to virulence in a mouse model of cryptococcosis. With chaperone CNE1, coordinately maintains ER homeostasis and contributes to maintenance of cell wall architecture. This is Tetratricopeptide repeat and J domain-containing co-chaperone DNJ1 from Cryptococcus neoformans var. grubii serotype A (strain H99 / ATCC 208821 / CBS 10515 / FGSC 9487) (Filobasidiella neoformans var. grubii).